The chain runs to 290 residues: Formamidopyrimidine-DNA glycosylase (290 aa).

The active-site Schiff-base intermediate with DNA is the Pro2. Glu3 (proton donor) is an active-site residue. Lys58 serves as the catalytic Proton donor; for beta-elimination activity. Residues His98, Arg126, and Arg171 each coordinate DNA. An FPG-type zinc finger spans residues 256-290 (FVYDRAGLPCRVCATPVRQIVQGQRSTFYCPKCQH). Arg280 functions as the Proton donor; for delta-elimination activity in the catalytic mechanism.

The protein belongs to the FPG family. As to quaternary structure, monomer. Requires Zn(2+) as cofactor.

It catalyses the reaction Hydrolysis of DNA containing ring-opened 7-methylguanine residues, releasing 2,6-diamino-4-hydroxy-5-(N-methyl)formamidopyrimidine.. The catalysed reaction is 2'-deoxyribonucleotide-(2'-deoxyribose 5'-phosphate)-2'-deoxyribonucleotide-DNA = a 3'-end 2'-deoxyribonucleotide-(2,3-dehydro-2,3-deoxyribose 5'-phosphate)-DNA + a 5'-end 5'-phospho-2'-deoxyribonucleoside-DNA + H(+). Its function is as follows. Involved in base excision repair of DNA damaged by oxidation or by mutagenic agents. Acts as a DNA glycosylase that recognizes and removes damaged bases. Has a preference for oxidized purines, such as 7,8-dihydro-8-oxoguanine (8-oxoG). Has AP (apurinic/apyrimidinic) lyase activity and introduces nicks in the DNA strand. Cleaves the DNA backbone by beta-delta elimination to generate a single-strand break at the site of the removed base with both 3'- and 5'-phosphates. The sequence is that of Formamidopyrimidine-DNA glycosylase from Cupriavidus taiwanensis (strain DSM 17343 / BCRC 17206 / CCUG 44338 / CIP 107171 / LMG 19424 / R1) (Ralstonia taiwanensis (strain LMG 19424)).